We begin with the raw amino-acid sequence, 186 residues long: ADP-ribosylation factor-like protein DDB_G0292332 (186 aa).

Residues 24–31, 78–82, and 138–141 each bind GTP; these read GVENVGKT, DIGGK, and NKQD.

Belongs to the small GTPase superfamily. Arf family.

In terms of biological role, binds and exchanges GTP and GDP. The polypeptide is ADP-ribosylation factor-like protein DDB_G0292332 (Dictyostelium discoideum (Social amoeba)).